Here is a 273-residue protein sequence, read N- to C-terminus: Putative phosphoenolpyruvate synthase regulatory protein (273 aa).

ADP is bound at residue 153–160; sequence AVSRAGKT.

It belongs to the pyruvate, phosphate/water dikinase regulatory protein family. PSRP subfamily.

It catalyses the reaction [pyruvate, water dikinase] + ADP = [pyruvate, water dikinase]-phosphate + AMP + H(+). The enzyme catalyses [pyruvate, water dikinase]-phosphate + phosphate + H(+) = [pyruvate, water dikinase] + diphosphate. Functionally, bifunctional serine/threonine kinase and phosphorylase involved in the regulation of the phosphoenolpyruvate synthase (PEPS) by catalyzing its phosphorylation/dephosphorylation. The protein is Putative phosphoenolpyruvate synthase regulatory protein of Xanthomonas campestris pv. campestris (strain ATCC 33913 / DSM 3586 / NCPPB 528 / LMG 568 / P 25).